The primary structure comprises 452 residues: Pup--protein ligase (452 aa).

A Mg(2+)-binding site is contributed by Glu9. Arg53 is a binding site for ATP. Residue Tyr55 participates in Mg(2+) binding. Asp57 functions as the Proton acceptor in the catalytic mechanism. Mg(2+) is bound at residue Glu63. ATP contacts are provided by Thr66 and Trp419.

The protein belongs to the Pup ligase/Pup deamidase family. Pup-conjugating enzyme subfamily.

It carries out the reaction ATP + [prokaryotic ubiquitin-like protein]-L-glutamate + [protein]-L-lysine = ADP + phosphate + N(6)-([prokaryotic ubiquitin-like protein]-gamma-L-glutamyl)-[protein]-L-lysine.. It functions in the pathway protein degradation; proteasomal Pup-dependent pathway. It participates in protein modification; protein pupylation. In terms of biological role, catalyzes the covalent attachment of the prokaryotic ubiquitin-like protein modifier Pup to the proteasomal substrate proteins, thereby targeting them for proteasomal degradation. This tagging system is termed pupylation. The ligation reaction involves the side-chain carboxylate of the C-terminal glutamate of Pup and the side-chain amino group of a substrate lysine. In Actinosynnema mirum (strain ATCC 29888 / DSM 43827 / JCM 3225 / NBRC 14064 / NCIMB 13271 / NRRL B-12336 / IMRU 3971 / 101), this protein is Pup--protein ligase.